The sequence spans 132 residues: Large ribosomal subunit protein bL19 (132 aa).

It belongs to the bacterial ribosomal protein bL19 family.

Its function is as follows. This protein is located at the 30S-50S ribosomal subunit interface and may play a role in the structure and function of the aminoacyl-tRNA binding site. This is Large ribosomal subunit protein bL19 from Persephonella marina (strain DSM 14350 / EX-H1).